We begin with the raw amino-acid sequence, 455 residues long: Pup--protein ligase (455 aa).

Mg(2+) is bound at residue Glu10. Arg55 lines the ATP pocket. Tyr57 lines the Mg(2+) pocket. The Proton acceptor role is filled by Asp59. Glu65 contributes to the Mg(2+) binding site. ATP contacts are provided by Thr68 and Trp422.

The protein belongs to the Pup ligase/Pup deamidase family. Pup-conjugating enzyme subfamily.

It carries out the reaction ATP + [prokaryotic ubiquitin-like protein]-L-glutamate + [protein]-L-lysine = ADP + phosphate + N(6)-([prokaryotic ubiquitin-like protein]-gamma-L-glutamyl)-[protein]-L-lysine.. Its pathway is protein degradation; proteasomal Pup-dependent pathway. It participates in protein modification; protein pupylation. Functionally, catalyzes the covalent attachment of the prokaryotic ubiquitin-like protein modifier Pup to the proteasomal substrate proteins, thereby targeting them for proteasomal degradation. This tagging system is termed pupylation. The ligation reaction involves the side-chain carboxylate of the C-terminal glutamate of Pup and the side-chain amino group of a substrate lysine. This is Pup--protein ligase from Sanguibacter keddieii (strain ATCC 51767 / DSM 10542 / NCFB 3025 / ST-74).